Here is a 478-residue protein sequence, read N- to C-terminus: Protein nucleotidyltransferase YdiU (478 aa).

Residues G84, G86, R87, K107, D119, G120, R170, and R177 each contribute to the ATP site. Residue D246 is the Proton acceptor of the active site. Residues N247 and D256 each contribute to the Mg(2+) site. D256 contributes to the ATP binding site.

Belongs to the SELO family. It depends on Mg(2+) as a cofactor. Mn(2+) serves as cofactor.

The catalysed reaction is L-seryl-[protein] + ATP = 3-O-(5'-adenylyl)-L-seryl-[protein] + diphosphate. It carries out the reaction L-threonyl-[protein] + ATP = 3-O-(5'-adenylyl)-L-threonyl-[protein] + diphosphate. It catalyses the reaction L-tyrosyl-[protein] + ATP = O-(5'-adenylyl)-L-tyrosyl-[protein] + diphosphate. The enzyme catalyses L-histidyl-[protein] + UTP = N(tele)-(5'-uridylyl)-L-histidyl-[protein] + diphosphate. The catalysed reaction is L-seryl-[protein] + UTP = O-(5'-uridylyl)-L-seryl-[protein] + diphosphate. It carries out the reaction L-tyrosyl-[protein] + UTP = O-(5'-uridylyl)-L-tyrosyl-[protein] + diphosphate. Nucleotidyltransferase involved in the post-translational modification of proteins. It can catalyze the addition of adenosine monophosphate (AMP) or uridine monophosphate (UMP) to a protein, resulting in modifications known as AMPylation and UMPylation. The chain is Protein nucleotidyltransferase YdiU from Escherichia coli O7:K1 (strain IAI39 / ExPEC).